We begin with the raw amino-acid sequence, 274 residues long: tRNA-cytidine(32) 2-sulfurtransferase (274 aa).

The short motif at 40–45 (SGGKDS) is the PP-loop motif element. 3 residues coordinate [4Fe-4S] cluster: C115, C118, and C206.

This sequence belongs to the TtcA family. In terms of assembly, homodimer. Mg(2+) is required as a cofactor. It depends on [4Fe-4S] cluster as a cofactor.

It localises to the cytoplasm. It carries out the reaction cytidine(32) in tRNA + S-sulfanyl-L-cysteinyl-[cysteine desulfurase] + AH2 + ATP = 2-thiocytidine(32) in tRNA + L-cysteinyl-[cysteine desulfurase] + A + AMP + diphosphate + H(+). It participates in tRNA modification. Catalyzes the ATP-dependent 2-thiolation of cytidine in position 32 of tRNA, to form 2-thiocytidine (s(2)C32). The sulfur atoms are provided by the cysteine/cysteine desulfurase (IscS) system. The polypeptide is tRNA-cytidine(32) 2-sulfurtransferase (Pseudomonas entomophila (strain L48)).